The primary structure comprises 537 residues: Probable quinate permease (537 aa).

Residues 1–22 (MSILSLVEDRPTPKEVYNWKIY) are Cytoplasmic-facing. The chain crosses the membrane as a helical span at residues 23–43 (LLAAVASCTSCMIGYDSAFIG). The Extracellular segment spans residues 44 to 74 (TTISLQSFKDEFDWDSMSAAHQDLVSSNIVS). A helical membrane pass occupies residues 75 to 95 (LYQAGAFFGAFFAYPIGHFWG). The Cytoplasmic portion of the chain corresponds to 96-97 (RK). The chain crosses the membrane as a helical span at residues 98–118 (WGLMVSALIFTLGAGIMLGTN). The Extracellular portion of the chain corresponds to 119–130 (GDRGFGLLYGGR). The helical transmembrane segment at 131–151 (VLAGLGVGAGSNITPIYISEL) threads the bilayer. Residues 152 to 159 (SPPAIRGR) lie on the Cytoplasmic side of the membrane. A helical membrane pass occupies residues 160–180 (LVGVYELGWQIGGLVGFWICY). Topologically, residues 181-193 (GVDETLPPSHKQW) are extracellular. A helical transmembrane segment spans residues 194 to 214 (IIPFAVQLIPSGLLIIGALFL). At 215 to 285 (KESPRWLFLR…AWTNKKILYR (71 aa)) the chain is on the cytoplasmic side. The helical transmembrane segment at 286–306 (LFLGSMLFFWQNGSGINAINY) threads the bilayer. Residues 307 to 325 (YSPTVFKSIGVTGSNTSLF) are Extracellular-facing. A helical membrane pass occupies residues 326–346 (TTGIFGVVKTVVTFIWLLWLI). At 347 to 352 (DRVGRR) the chain is on the cytoplasmic side. A helical membrane pass occupies residues 353–373 (LLLLIGAAGGSICLWIVGAYI). At 374 to 387 (KIARPSERENKQMD) the chain is on the extracellular side. The helical transmembrane segment at 388–408 (GGGIAAMFFFYLWTVFYTPSW) threads the bilayer. Residues 409–456 (NGTPWVINSEMFDPNIRSLAQACAAGSNWLWNFLISRFTPQMFAKMDY) lie on the Cytoplasmic side of the membrane. A helical membrane pass occupies residues 457-477 (GVYFFFASLMILSIIFVFFLI). Residues 478–537 (PETKGIPLESMDRLFETQPIWRAHGTLLKQIREDEERFRHDLEDSGFVKSTDRQVEVVDA) are Extracellular-facing.

The protein belongs to the major facilitator superfamily. Sugar transporter (TC 2.A.1.1) family. In terms of assembly, interacts with creB. Ubiquitinated. Deubiquitinated by creB, probably to control its activity or amount.

Its subcellular location is the cell membrane. Functionally, integral membrane transporter that imports quinic acid to be catabolized as a carbon source. The polypeptide is Probable quinate permease (qutD) (Aspergillus flavus (strain ATCC 200026 / FGSC A1120 / IAM 13836 / NRRL 3357 / JCM 12722 / SRRC 167)).